A 461-amino-acid chain; its full sequence is MSFVNVAPQLVSTAAADAARIGSAINTANTAAAATTQVLAAAQDEVSTAIAALFGSHGQHYQAISAQVAAYQQRFVLALSQAGSTYAVAEAASATPLQNVLDAINAPVQSLTGRPLIGDGANGIDGTGQAGGNGGWLWGNGGNGGSGAPGQAGGAGGAAGLIGNGGAGGAGGQGLPFEAGANGGAGGAGGWLFGNGGAGGNGGIGGAGTNLAIGGHGGNGGNAGLIGAGGTGGAGGTGGGEPSAGASGGNGGNGGNGGLLIGNSGDGGAAGNGAGISQNGPASGFGGNGGHAGTTGLIGNGGNGGAGGAGGDVSADFGGVGFGGQGGNGGAGGLLYGNGGAGGNGGAAGSPGSVTAFGGNGGSGGSGGNGGNALIGNAGAGGSAGAGGNGASAGTAGGSGGDGGKGGNGGSVGLIGNGGNGGNGGAGSLFNGAPGFGGPGGSGGASLLGPPGLAGTNGADG.

Residues 4-92 form the PE domain; the sequence is VNVAPQLVST…GSTYAVAEAA (89 aa). Disordered stretches follow at residues 232–251 and 426–461; these read GGAG…GGNG and AGSL…GADG. Residues 434–446 show a composition bias toward gly residues; sequence PGFGGPGGSGGAS.

Belongs to the mycobacterial PE family. PGRS subfamily. In terms of assembly, interacts with human TIMM23, which is part of a complex that mediates the translocation of transit peptide-containing proteins across the mitochondrial inner membrane.

It is found in the cell membrane. The protein localises to the secreted. Its subcellular location is the cell wall. It localises to the host mitochondrion. It catalyses the reaction hexadecanal + NADP(+) + CoA = hexadecanoyl-CoA + NADPH + H(+). With respect to regulation, oxidoreductase activity is inhibited by the first line anti-tubercular drug isoniazid (INH). Its function is as follows. May be an effector protein that contributes to pathogenesis by targeting host mitochondria, where it modulates host cellular processes. In THP1 macrophages, increases the ADP-to-ATP ratio and increases the cellular ROS levels. Also induces mitochondrial perturbations through membrane depolarization, release of mitochondrial superoxide, up-regulation of expression of host proapoptotic proteins (BAX and BIM) and release of cytochrome C into the cytosol. May bind calcium to increase intracellular calcium influx, which may further lead to mitochondrial perturbations. Mitochondrial perturbations and alteration of Ca(2+) influx are independent but simultaneous events. In vitro, shows NADPH-dependent fatty acyl coenzyme A oxidoreductase activity. Can oxidize palmitoyl-CoA, but not glutathione and thiourea. The polypeptide is PE-PGRS family protein PE_PGRS45 (Mycobacterium tuberculosis (strain ATCC 25618 / H37Rv)).